We begin with the raw amino-acid sequence, 795 residues long: Delta-1-pyrroline-5-carboxylate synthase (795 aa).

The segment at M1–P361 is glutamate 5-kinase. Residues S117, D223, and N246 each coordinate substrate. Residues S266–D267 and M305–K311 each bind ATP. An N6-succinyllysine mark is found at K311, K347, and K550. Residues T362–N795 are gamma-glutamyl phosphate reductase.

It in the N-terminal section; belongs to the glutamate 5-kinase family. In the C-terminal section; belongs to the gamma-glutamyl phosphate reductase family. In terms of assembly, can form homodimers/multimers.

The protein localises to the mitochondrion matrix. The enzyme catalyses L-glutamate + ATP = L-glutamyl 5-phosphate + ADP. The catalysed reaction is L-glutamate 5-semialdehyde + phosphate + NADP(+) = L-glutamyl 5-phosphate + NADPH + H(+). Its pathway is amino-acid biosynthesis; L-proline biosynthesis; L-glutamate 5-semialdehyde from L-glutamate: step 1/2. The protein operates within amino-acid biosynthesis; L-proline biosynthesis; L-glutamate 5-semialdehyde from L-glutamate: step 2/2. In terms of biological role, bifunctional enzyme that converts glutamate to glutamate 5-semialdehyde, an intermediate in the biosynthesis of proline, ornithine and arginine. This Pongo abelii (Sumatran orangutan) protein is Delta-1-pyrroline-5-carboxylate synthase (ALDH18A1).